The following is a 291-amino-acid chain: Feruloyl esterase B (291 aa).

Residues 1–18 (MLVRSFLGFAVLAATCLA) form the signal peptide. N-linked (GlcNAc...) asparagine glycosylation is present at N117. S136 functions as the Charge relay system in the catalytic mechanism. N179 carries an N-linked (GlcNAc...) asparagine glycan.

This sequence belongs to the carbohydrate esterase 1 (CE1) family. Feruloyl esterase type B subfamily.

The protein resides in the secreted. The catalysed reaction is feruloyl-polysaccharide + H2O = ferulate + polysaccharide.. In terms of biological role, feruloyl esterase which acts in synergy with xylanases in degradation of plant cell walls. Hydrolyzes the ester linkage of hydroxycinnamic acids (ferulic acid (FA) and p-coumaric acid) and diferulates present in plant cell walls. Is active on substrates containing ferulic acid ester linked to the C-5 and C-2 linkages of arabinofuranose, while it was found capable of de-esterifying acetylated glucuronoxylans. Efficiently releases ferulic acid (FA) from destarched wheat bran when incubated with an M3 xylanase. This Thermothelomyces thermophilus (strain ATCC 42464 / BCRC 31852 / DSM 1799) (Sporotrichum thermophile) protein is Feruloyl esterase B (Fae1a).